A 379-amino-acid chain; its full sequence is Cobalt-precorrin-5B C(1)-methyltransferase (379 aa).

It belongs to the CbiD family.

The catalysed reaction is Co-precorrin-5B + S-adenosyl-L-methionine = Co-precorrin-6A + S-adenosyl-L-homocysteine. Its pathway is cofactor biosynthesis; adenosylcobalamin biosynthesis; cob(II)yrinate a,c-diamide from sirohydrochlorin (anaerobic route): step 6/10. In terms of biological role, catalyzes the methylation of C-1 in cobalt-precorrin-5B to form cobalt-precorrin-6A. The sequence is that of Cobalt-precorrin-5B C(1)-methyltransferase from Salmonella dublin (strain CT_02021853).